A 239-amino-acid polypeptide reads, in one-letter code: 3-dehydroquinate dehydratase (239 aa).

3-dehydroquinate-binding positions include 35–37 (ELR) and Arg-70. Catalysis depends on His-133, which acts as the Proton donor/acceptor. The active-site Schiff-base intermediate with substrate is the Lys-160. 2 residues coordinate 3-dehydroquinate: Arg-202 and Gln-225.

Belongs to the type-I 3-dehydroquinase family. As to quaternary structure, homodimer.

It catalyses the reaction 3-dehydroquinate = 3-dehydroshikimate + H2O. Its pathway is metabolic intermediate biosynthesis; chorismate biosynthesis; chorismate from D-erythrose 4-phosphate and phosphoenolpyruvate: step 3/7. Its function is as follows. Involved in the third step of the chorismate pathway, which leads to the biosynthesis of aromatic amino acids. Catalyzes the cis-dehydration of 3-dehydroquinate (DHQ) and introduces the first double bond of the aromatic ring to yield 3-dehydroshikimate. This chain is 3-dehydroquinate dehydratase, found in Staphylococcus saprophyticus subsp. saprophyticus (strain ATCC 15305 / DSM 20229 / NCIMB 8711 / NCTC 7292 / S-41).